Here is a 1316-residue protein sequence, read N- to C-terminus: DNA-directed RNA polymerase subunit beta' (1316 aa).

Zn(2+) is bound by residues Cys60, Cys62, Cys75, and Cys78. Residues Asp535, Asp537, and Asp539 each contribute to the Mg(2+) site. Positions 891, 968, 975, and 978 each coordinate Zn(2+).

Belongs to the RNA polymerase beta' chain family. In terms of assembly, the RNAP catalytic core consists of 2 alpha, 1 beta, 1 beta' and 1 omega subunit. When a sigma factor is associated with the core the holoenzyme is formed, which can initiate transcription. Requires Mg(2+) as cofactor. Zn(2+) serves as cofactor.

It catalyses the reaction RNA(n) + a ribonucleoside 5'-triphosphate = RNA(n+1) + diphosphate. In terms of biological role, DNA-dependent RNA polymerase catalyzes the transcription of DNA into RNA using the four ribonucleoside triphosphates as substrates. The sequence is that of DNA-directed RNA polymerase subunit beta' from Mycolicibacterium paratuberculosis (strain ATCC BAA-968 / K-10) (Mycobacterium paratuberculosis).